The chain runs to 113 residues: Putative single-stranded DNA-binding protein ycf41 (113 aa).

In terms of domain architecture, SSB spans 1 to 101; the sequence is MNYASFIIKI…EVSGFKIYPF (101 aa).

It is found in the plastid. The protein resides in the chloroplast. The polypeptide is Putative single-stranded DNA-binding protein ycf41 (ycf41) (Trieres chinensis (Marine centric diatom)).